The chain runs to 525 residues: Ankyrin repeat domain-containing protein SOWAHC (525 aa).

The interval 84 to 263 is disordered; the sequence is CEGPSEPSGD…EESSGGGSVT (180 aa). At serine 88 the chain carries Phosphoserine. Low complexity predominate over residues 101 to 112; that stretch reads AEPEAPDGPAGP. Serine 126, serine 213, and serine 226 each carry phosphoserine. Residues 230–241 are compositionally biased toward gly residues; sequence SSGGGRGRGGGD. Residues 242-251 are compositionally biased toward low complexity; that stretch reads SDSASVASSS. ANK repeat units follow at residues 301 to 330 and 340 to 370; these read TGFT…KHQL and GGYT…DVDI. The interval 434-525 is disordered; the sequence is DGGDHHHHHH…TLRPKSNVFG (92 aa). The segment covering 468-477 has biased composition (basic residues); sequence IKPRLNKIRF. The segment covering 489-509 has biased composition (basic and acidic residues); sequence RDPEQPLEGRGEEGVGEERPV.

Belongs to the SOWAH family.

The polypeptide is Ankyrin repeat domain-containing protein SOWAHC (SOWAHC) (Homo sapiens (Human)).